The chain runs to 178 residues: Oligoribonuclease (178 aa).

Positions 7–168 constitute an Exonuclease domain; that stretch reads LIWIDLEMTG…DDIRESIAEL (162 aa). Tyrosine 128 is an active-site residue.

The protein belongs to the oligoribonuclease family.

It localises to the cytoplasm. 3'-to-5' exoribonuclease specific for small oligoribonucleotides. This is Oligoribonuclease from Pseudomonas syringae pv. syringae (strain B728a).